The sequence spans 420 residues: Anaerobic glycerol-3-phosphate dehydrogenase subunit B (420 aa).

Belongs to the anaerobic G-3-P dehydrogenase subunit B family. As to quaternary structure, composed of a catalytic GlpA/B dimer and of membrane bound GlpC. FMN serves as cofactor.

It catalyses the reaction a quinone + sn-glycerol 3-phosphate = dihydroxyacetone phosphate + a quinol. The protein operates within polyol metabolism; glycerol degradation via glycerol kinase pathway; glycerone phosphate from sn-glycerol 3-phosphate (anaerobic route): step 1/1. Conversion of glycerol 3-phosphate to dihydroxyacetone. Uses fumarate or nitrate as electron acceptor. In Pectobacterium atrosepticum (strain SCRI 1043 / ATCC BAA-672) (Erwinia carotovora subsp. atroseptica), this protein is Anaerobic glycerol-3-phosphate dehydrogenase subunit B.